A 231-amino-acid polypeptide reads, in one-letter code: DNA damage response protein C (231 aa).

In terms of assembly, homodimer.

The protein resides in the cytoplasm. It localises to the nucleoid. Appears to contribute to D.radiodurans capacity to survive exposure to ionizing radiation. Likely functions as a DNA damage-induced nucleoid-associated protein (NAP) that contributes to the enhanced level of nucleoid compaction after irradiation by bridging DNA duplexes, thereby limiting the dispersion of the fragmented genome immediately after irradiation to facilitate subsequent DNA repair. In vitro, binds both ssDNA and dsDNA, and is able to compact circular DNA, circularize linear DNA, anneal complementary DNA strands and protect DNA from nucleases. The sequence is that of DNA damage response protein C from Deinococcus radiodurans (strain ATCC 13939 / DSM 20539 / JCM 16871 / CCUG 27074 / LMG 4051 / NBRC 15346 / NCIMB 9279 / VKM B-1422 / R1).